Here is a 284-residue protein sequence, read N- to C-terminus: MEMO1 family protein MMP1387 (284 aa).

The protein belongs to the MEMO1 family.

The polypeptide is MEMO1 family protein MMP1387 (Methanococcus maripaludis (strain DSM 14266 / JCM 13030 / NBRC 101832 / S2 / LL)).